A 70-amino-acid chain; its full sequence is Movement protein TGBp3 (70 aa).

At 1–4 (MEVN) the chain is on the lumenal side. Residues 5 to 27 (TYLNAIILVLVVTIIAVISTSLV) traverse the membrane as a helical segment. Residues 28-70 (RTEPCVIKITGESITVLACKLDAETIKAIADLKPLSVERLSFH) are Cytoplasmic-facing.

The protein belongs to the Tymovirales TGBp3 protein family.

Its subcellular location is the host endoplasmic reticulum membrane. Plays a role in viral cell-to-cell propagation, by facilitating genome transport to neighboring plant cells through plasmosdesmata. May induce the formation of granular vesicles derived from the endoplasmic reticulum, which align on actin filaments. This chain is Movement protein TGBp3, found in Brassica campestris (Field mustard).